The primary structure comprises 242 residues: Large ribosomal subunit protein uL1 (242 aa).

This sequence belongs to the universal ribosomal protein uL1 family. In terms of assembly, part of the 50S ribosomal subunit.

Binds directly to 23S rRNA. The L1 stalk is quite mobile in the ribosome, and is involved in E site tRNA release. In terms of biological role, protein L1 is also a translational repressor protein, it controls the translation of the L11 operon by binding to its mRNA. The protein is Large ribosomal subunit protein uL1 of Dictyoglomus turgidum (strain DSM 6724 / Z-1310).